A 339-amino-acid chain; its full sequence is tRNA N6-adenosine threonylcarbamoyltransferase (339 aa).

Fe cation-binding residues include H111 and H115. Substrate is bound by residues 134–138 (VVSGG), D167, G180, and N279. D307 contributes to the Fe cation binding site.

This sequence belongs to the KAE1 / TsaD family. Fe(2+) is required as a cofactor.

Its subcellular location is the cytoplasm. The enzyme catalyses L-threonylcarbamoyladenylate + adenosine(37) in tRNA = N(6)-L-threonylcarbamoyladenosine(37) in tRNA + AMP + H(+). Its function is as follows. Required for the formation of a threonylcarbamoyl group on adenosine at position 37 (t(6)A37) in tRNAs that read codons beginning with adenine. Is involved in the transfer of the threonylcarbamoyl moiety of threonylcarbamoyl-AMP (TC-AMP) to the N6 group of A37, together with TsaE and TsaB. TsaD likely plays a direct catalytic role in this reaction. This Syntrophobacter fumaroxidans (strain DSM 10017 / MPOB) protein is tRNA N6-adenosine threonylcarbamoyltransferase.